A 296-amino-acid polypeptide reads, in one-letter code: Cytidine deaminase (296 aa).

CMP/dCMP-type deaminase domains follow at residues 47-167 (TEAE…FGPK) and 186-296 (DSSD…VDPV). 88–90 (NLE) contacts substrate. His-101 contacts Zn(2+). The active-site Proton donor is Glu-103. Zn(2+) contacts are provided by Cys-128 and Cys-131.

Belongs to the cytidine and deoxycytidylate deaminase family. In terms of assembly, homodimer. It depends on Zn(2+) as a cofactor.

It carries out the reaction cytidine + H2O + H(+) = uridine + NH4(+). The enzyme catalyses 2'-deoxycytidine + H2O + H(+) = 2'-deoxyuridine + NH4(+). This enzyme scavenges exogenous and endogenous cytidine and 2'-deoxycytidine for UMP synthesis. The polypeptide is Cytidine deaminase (Shewanella sp. (strain ANA-3)).